Consider the following 414-residue polypeptide: Meiotic driver wtf19 (414 aa).

Residues 1–94 are disordered; it reads MKNKYYPVRT…RENHSSGTAD (94 aa). The span at 11 to 29 shows a compositional bias: basic and acidic residues; that stretch reads SMDEMNAKNDNEIDLEKGP. The span at 57-72 shows a compositional bias: polar residues; that stretch reads GANNPNLFNTDESTTP. Transmembrane regions (helical) follow at residues 99–119, 136–156, 170–190, 192–212, 222–242, 247–267, 284–304, 311–331, and 339–359; these read FLIKLLISFIPIFVLNVPAVC, WVYFGVWCAICLMIFISLWCF, VTVIFLAQCIKVTVISLAQCV, VTAIFLAQCIKVTVISLAQCV, CVKVTVISLAKCVKVISIGLF, EMMIIIWILWLIICCILFGCV, TISAVLFLIVSSVCIPIWTLW, LQVLGIHGIIAVLVNGLMSLF, and GYEIEGFVLFFTSSALFLYEM.

This sequence belongs to the WTF family. Homomer. Forms protein aggregates. The two isoforms can interact with each other and with themselves. High sequence similarity is required for their interaction.

Its subcellular location is the spore membrane. It localises to the vacuole membrane. The protein localises to the ascus epiplasm. It is found in the cytoplasm. The protein resides in the endoplasmic reticulum membrane. In terms of biological role, promotes unequal transmission of alleles from the parental zygote to progeny spores by acting as poison/antidote system where the poison and antidote proteins are produced from the same locus; the poison component is trans-acting and targets all spores within an ascus whereas the antidote component is spore-specific, leading to poisoning of all progeny that do not inherit the allele. Its function is as follows. Localizes isoform 2 to the vacuole thereby facilitating its degradation. Functionally, forms toxic aggregates that disrupt spore maturation. This chain is Meiotic driver wtf19, found in Schizosaccharomyces kambucha (Fission yeast).